A 139-amino-acid chain; its full sequence is Putative pre-16S rRNA nuclease (139 aa).

This sequence belongs to the YqgF nuclease family.

The protein localises to the cytoplasm. In terms of biological role, could be a nuclease involved in processing of the 5'-end of pre-16S rRNA. The sequence is that of Putative pre-16S rRNA nuclease from Streptococcus agalactiae serotype Ia (strain ATCC 27591 / A909 / CDC SS700).